Consider the following 478-residue polypeptide: GMP reductase (478 aa).

CBS domains follow at residues 95–152 (VVDT…VRDI) and 153–211 (ALSD…AVDA). NADP(+) is bound by residues 245–247 (DTA) and 295–297 (GVG). The Thioimidate intermediate role is filled by Cys302.

Belongs to the IMPDH/GMPR family. GuaB1 subfamily. As to quaternary structure, homooctamer composed of two tetramers. The oligomerization state is regulated by ligands and pH. It depends on a monovalent cation as a cofactor.

It carries out the reaction IMP + NH4(+) + NADP(+) = GMP + NADPH + 2 H(+). Its pathway is purine metabolism; IMP biosynthesis via salvage pathway. With respect to regulation, activity is allosterically regulated by the ATP/GTP ratio in a pH-dependent manner. At pH 7.8, GTP has only a minor positive effect and ATP only a minor negative effect on the activity, however, at lower pH values, the effects of ATP and GTP increase. ATP-dependent inhibition can be restored by increasing GTP concentration. IMP and XMP are competitive inhibitors. In terms of biological role, involved in the purine-salvage pathway. Catalyzes the NADPH-dependent conversion of GMP to IMP. Is not essential for viability, but may contribute to the regulation of the purine nucleotide pool by recycling GMP to IMP. The polypeptide is GMP reductase (Mycolicibacterium smegmatis (strain ATCC 700084 / mc(2)155) (Mycobacterium smegmatis)).